Reading from the N-terminus, the 890-residue chain is Serine/threonine-protein kinase greatwall (890 aa).

One can recognise a Protein kinase domain in the interval 33-846 (FSIVKPISRG…LKDLKAHHLF (814 aa)). Residues 39-47 (ISRGAFGKV) and Lys-62 contribute to the ATP site. Asp-156 functions as the Proton acceptor in the catalytic mechanism. Disordered regions lie at residues 324–353 (AEAP…GSSA), 412–434 (HKDL…DSPP), 517–541 (NYAS…LGSG), 559–592 (DGEA…MSVT), and 609–628 (ELSF…PENK). Over residues 412–425 (HKDLGKDDQGELEK) the composition is skewed to basic and acidic residues. Polar residues predominate over residues 576 to 592 (ESLNQDSESSSADMSVT). Positions 615–624 (SPSESNEETT) are enriched in acidic residues. A Phosphothreonine; by CDK1 modification is found at Thr-752. The AGC-kinase C-terminal domain occupies 847 to 890 (HAIEWDDLQNLPMPFIPQPDDETDTTYFEARNNAQHLKVSGFSL).

This sequence belongs to the protein kinase superfamily. AGC Ser/Thr protein kinase family. Post-translationally, phosphorylation at Thr-752 by CDK1 during M phase activates its kinase activity. Maximum phosphorylation occurs in prometaphase.

It localises to the cytoplasm. The protein localises to the cytoskeleton. Its subcellular location is the microtubule organizing center. It is found in the centrosome. The protein resides in the nucleus. The catalysed reaction is L-seryl-[protein] + ATP = O-phospho-L-seryl-[protein] + ADP + H(+). It carries out the reaction L-threonyl-[protein] + ATP = O-phospho-L-threonyl-[protein] + ADP + H(+). Serine/threonine kinase that plays a key role in M phase by acting as a regulator of mitosis entry and maintenance. Acts by promoting the inactivation of protein phosphatase 2A (PP2A) during M phase: does not directly inhibit PP2A but acts by mediating phosphorylation and subsequent activation of arpp19 and ensa at 'Ser-67', 2 phosphatase inhibitors that specifically inhibit the ppp2r2d (PR55-delta) subunit of PP2A. Inactivation of PP2A during M phase is essential to keep cyclin-B1-CDK1 activity high. Following DNA damage, it is also involved in checkpoint recovery by being inhibited. This is Serine/threonine-protein kinase greatwall (mastl) from Xenopus tropicalis (Western clawed frog).